We begin with the raw amino-acid sequence, 524 residues long: Alkaline phosphatase, tissue-nonspecific isozyme (524 aa).

The N-terminal stretch at 1–17 (MISPFLVLAIGTCLTNS) is a signal peptide. Asp-60 lines the Mg(2+) pocket. Residues Asp-60 and Ser-110 each coordinate Zn(2+). Ser-110 serves as the catalytic Phosphoserine intermediate. Residue Ser-110 is modified to Phosphoserine. A disulfide bridge links Cys-139 with Cys-201. The N-linked (GlcNAc...) asparagine glycan is linked to Asn-140. Mg(2+) is bound at residue Thr-173. The N-linked (GlcNAc...) asparagine glycan is linked to Asn-230. Residue Glu-235 coordinates Ca(2+). N-linked (GlcNAc...) asparagine glycosylation occurs at Asn-271. Residues Phe-290 and Glu-291 each coordinate Ca(2+). Asn-303 carries an N-linked (GlcNAc...) asparagine glycan. Asp-306 is a Ca(2+) binding site. Position 332 (Glu-332) interacts with Mg(2+). Zn(2+)-binding residues include Asp-337, His-341, Asp-378, and His-379. Asn-430 carries an N-linked (GlcNAc...) asparagine glycan. His-454 serves as a coordination point for Zn(2+). Cys-489 and Cys-497 form a disulfide bridge. A lipid anchor (GPI-anchor amidated glycine) is attached at Gly-501. Positions 502 to 524 (SGSAPSPGALLLPLAVLSLRTLF) are cleaved as a propeptide — removed in mature form.

Belongs to the alkaline phosphatase family. Homodimer. Mg(2+) serves as cofactor. Requires Zn(2+) as cofactor. Ca(2+) is required as a cofactor. Post-translationally, N-glycosylated. As to expression, widely expressed. Expressed in DRG neurons and spinal cord neurons.

The protein resides in the cell membrane. The protein localises to the extracellular vesicle membrane. It is found in the mitochondrion membrane. Its subcellular location is the mitochondrion intermembrane space. It catalyses the reaction a phosphate monoester + H2O = an alcohol + phosphate. The enzyme catalyses diphosphate + H2O = 2 phosphate + H(+). The catalysed reaction is pyridoxal 5'-phosphate + H2O = pyridoxal + phosphate. It carries out the reaction phosphoethanolamine + H2O = ethanolamine + phosphate. It catalyses the reaction N-phosphocreatine + H2O = creatine + phosphate. The enzyme catalyses ATP + H2O = ADP + phosphate + H(+). The catalysed reaction is ADP + H2O = AMP + phosphate + H(+). It carries out the reaction AMP + H2O = adenosine + phosphate. With respect to regulation, phosphatase activity is specifically inhibited by 5-((5-chloro-2-methoxyphenyl)sulfonamido)nicotinamide (SBI-425). Its function is as follows. Alkaline phosphatase that metabolizes various phosphate compounds and plays a key role in skeletal mineralization and adaptive thermogenesis. Has broad substrate specificity and can hydrolyze a considerable variety of compounds: however, only a few substrates, such as diphosphate (inorganic pyrophosphate; PPi), pyridoxal 5'-phosphate (PLP) and N-phosphocreatine are natural substrates. Plays an essential role in skeletal and dental mineralization via its ability to hydrolyze extracellular diphosphate, a potent mineralization inhibitor, to phosphate: it thereby promotes hydroxyapatite crystal formation and increases inorganic phosphate concentration. Acts in a non-redundant manner with PHOSPHO1 in skeletal mineralization: while PHOSPHO1 mediates the initiation of hydroxyapatite crystallization in the matrix vesicles (MVs), ALPL/TNAP catalyzes the spread of hydroxyapatite crystallization in the extracellular matrix. Also promotes dephosphorylation of osteopontin (SSP1), an inhibitor of hydroxyapatite crystallization in its phosphorylated state; it is however unclear whether ALPL/TNAP mediates SSP1 dephosphorylation via a direct or indirect manner. Catalyzes dephosphorylation of PLP to pyridoxal (PL), the transportable form of vitamin B6, in order to provide a sufficient amount of PLP in the brain, an essential cofactor for enzymes catalyzing the synthesis of diverse neurotransmitters. Additionally, also able to mediate ATP degradation in a stepwise manner to adenosine, thereby regulating the availability of ligands for purinergic receptors. Also capable of dephosphorylating microbial products, such as lipopolysaccharides (LPS) as well as other phosphorylated small-molecules, such as poly-inosine:cytosine (poly I:C). Acts as a key regulator of adaptive thermogenesis as part of the futile creatine cycle: localizes to the mitochondria of thermogenic fat cells and acts by mediating hydrolysis of N-phosphocreatine to initiate a futile cycle of creatine dephosphorylation and phosphorylation. During the futile creatine cycle, creatine and N-phosphocreatine are in a futile cycle, which dissipates the high energy charge of N-phosphocreatine as heat without performing any mechanical or chemical work. The sequence is that of Alkaline phosphatase, tissue-nonspecific isozyme from Mus musculus (Mouse).